A 756-amino-acid polypeptide reads, in one-letter code: Putative beta-xylosidase (756 aa).

The first 18 residues, 1–18 (MKKLLFTFLVSTGTIFFS), serve as a signal peptide directing secretion. Residue C19 is the site of N-palmitoyl cysteine attachment. A lipid anchor (S-diacylglycerol cysteine) is attached at C19.

The protein belongs to the glycosyl hydrolase 3 family.

It is found in the cell outer membrane. In terms of biological role, glycoside hydrolase probably involved in ulvan degradation. Ulvan is the main polysaccharide component of the Ulvales (green seaweed) cell wall. It is composed of disaccharide building blocks comprising 3-sulfated rhamnose (Rha3S) linked to D-glucuronic acid (GlcA), L-iduronic acid (IduA), or D-xylose (Xyl). This chain is Putative beta-xylosidase, found in Formosa agariphila (strain DSM 15362 / KCTC 12365 / LMG 23005 / KMM 3901 / M-2Alg 35-1).